Here is a 707-residue protein sequence, read N- to C-terminus: Lipase maturation factor 2 (707 aa).

The next 10 membrane-spanning stretches (helical) occupy residues 10-30 (AFLW…YVQI), 78-98 (MELI…FSCL), 102-122 (LVFL…QVFL), 126-146 (WDSL…LHAM), 158-178 (GVTF…SGVV), 220-240 (FSVV…FLPF), 256-276 (ILII…VLCC), 309-329 (LVSL…VKYF), 358-378 (ITFP…LKGM), and 395-415 (LQWL…LVPY). A glycan (N-linked (GlcNAc...) asparagine) is linked at Asn-483. A helical membrane pass occupies residues 634-654 (LLLHSFIFGIFTIYFLQAMFG). The segment at 661-707 (VAKQRHSMPPNEKKKQKPNSGQGESASSKSSGHGTDTVRRNKKNEKS) is disordered. A compositionally biased stretch (low complexity) spans 680 to 694 (SGQGESASSKSSGHG). The segment covering 696-707 (DTVRRNKKNEKS) has biased composition (basic and acidic residues).

Belongs to the lipase maturation factor family.

The protein localises to the endoplasmic reticulum membrane. Functionally, involved in the maturation of specific proteins in the endoplasmic reticulum. This chain is Lipase maturation factor 2 (lmf2), found in Xenopus laevis (African clawed frog).